We begin with the raw amino-acid sequence, 52 residues long: Large ribosomal subunit protein bL33 (52 aa).

The protein belongs to the bacterial ribosomal protein bL33 family.

This Helicobacter pylori (strain HPAG1) protein is Large ribosomal subunit protein bL33.